A 685-amino-acid chain; its full sequence is Protein SPT2 homolog (685 aa).

The interval 1 to 570 (MDFREILMIA…PPLSGYRAAQ (570 aa)) is important for interaction with DNA. A Glycyl lysine isopeptide (Lys-Gly) (interchain with G-Cter in SUMO2) cross-link involves residue Lys-37. Residues 45 to 81 (QAFLKRKEEELRRKALEEKRRKEELVKKRIELKHDKK) are a coiled coil. Residues 79–168 (DKKARAMAKR…PLKSAPPPMN (90 aa)) are disordered. Residues 101-111 (IEEKSKKRQAT) are compositionally biased toward basic and acidic residues. The stretch at 123-148 (YEMEEENEFLEYNHAESEQEYEEEQE) forms a coiled coil. A Glycyl lysine isopeptide (Lys-Gly) (interchain with G-Cter in SUMO2) cross-link involves residue Lys-187. 2 stretches are compositionally biased toward basic and acidic residues: residues 188 to 209 (VVKK…EFLE) and 260 to 275 (HAEK…EKHL). 2 disordered regions span residues 188-615 (VVKK…QEEI) and 644-685 (SWKE…LKRR). Ser-278 carries the post-translational modification Phosphoserine. 3 stretches are compositionally biased toward low complexity: residues 317–330 (SSTS…TSAS), 365–385 (SPGV…PSTG), and 402–415 (GSSS…ISGS). A compositionally biased stretch (polar residues) spans 416 to 431 (KKPTNDSNPSRRTVSG). The segment covering 435 to 501 (PGQPASSSGG…PGRSISGSIP (67 aa)) has biased composition (low complexity). Ser-471 is modified (phosphoserine). A compositionally biased stretch (polar residues) spans 519–529 (GPGQTVSSSGP). Low complexity predominate over residues 542-553 (ISSKNIISRSSN). The interval 571-685 (GPQRLPFPTG…RRRAKKLKRR (115 aa)) is important for interaction with histones. N6-acetyllysine is present on Lys-582. Positions 587 to 613 (YEEEDDDDDEYDSEMEDFIEDEGEPQE) are enriched in acidic residues. Phosphoserine is present on Ser-599. Basic and acidic residues-rich tracts occupy residues 644–655 (SWKEQQKEEAKS) and 666–676 (EMRREEEEMQR). Residues 645-685 (WKEQQKEEAKSLRLGMQEDLEEMRREEEEMQRRRAKKLKRR) are a coiled coil.

This sequence belongs to the SPT2 family. In terms of assembly, interacts with histones. Interacts with a heterotetrameric complex formed by histone H3 and H4, especially when the histone tetramer is not bound to DNA. Interacts with histone H3.3.

The protein resides in the nucleus. It localises to the nucleolus. Its function is as follows. Histone chaperone that stabilizes pre-existing histone tetramers and regulates replication-independent histone exchange on chromatin. Required for normal chromatin refolding in the coding region of transcribed genes, and for the suppression of spurious transcription. Binds DNA and histones and promotes nucleosome assembly (in vitro). Facilitates formation of tetrameric histone complexes containing histone H3 and H4. Modulates RNA polymerase 1-mediated transcription. Binds DNA, with a preference for branched DNA species, such as Y-form DNA and Holliday junction DNA. The polypeptide is Protein SPT2 homolog (SPTY2D1) (Homo sapiens (Human)).